Reading from the N-terminus, the 449-residue chain is Nucleoprotein (449 aa).

The disordered stretch occupies residues 1 to 55 (MSFTPGKQSSSRASSGNRSGNGILKWADQSDQSRNVQTRGRRVQSKQTATSQQPS). Positions 9-22 (SSSRASSGNRSGNG) are enriched in low complexity. 2 stretches are compositionally biased toward polar residues: residues 29–38 (QSDQSRNVQT) and 45–55 (SKQTATSQQPS). Residues 52–194 (QQPSGGTVVP…GYYIEGSGRS (143 aa)) are RNA-binding. Residues 61–190 (PYYSWFSGIT…VLPQGYYIEG (130 aa)) enclose the CoV N NTD domain. The RNA site is built by R106, R122, and R164. 3 disordered regions span residues 158 to 231 (PADI…VTPD), 266 to 297 (ILNK…NFGG), and 387 to 449 (MMNI…TSEI). At S167 the chain carries Phosphoserine; by host. T174 carries the post-translational modification Phosphothreonine; by host. The residue at position 191 (S191) is a Phosphoserine; by host. Polar residues-rich tracts occupy residues 194-204 (SAPNSRSTSRA) and 212-227 (GSRS…STPG). The CoV N CTD domain occupies 259–384 (AKEVRQKILN…QNLNAYQHQE (126 aa)). Residues 266–276 (ILNKPRQKRSP) are compositionally biased toward basic residues. The segment at 266 to 385 (ILNKPRQKRS…NLNAYQHQED (120 aa)) is dimerization. At S391 the chain carries Phosphoserine; by host. The span at 400 to 410 (QKNGQVENDNV) shows a compositional bias: polar residues. Residues 423 to 440 (KSRELTAEDISLLKKMDE) show a composition bias toward basic and acidic residues. S424 bears the Phosphoserine; by host mark. T428 bears the Phosphothreonine; by host mark.

The protein belongs to the betacoronavirus nucleocapsid protein family. As to quaternary structure, homooligomer. Both monomeric and oligomeric forms interact with RNA. Interacts with protein M. Interacts with NSP3; this interaction serves to tether the genome to the newly translated replicase-transcriptase complex at a very early stage of infection. In terms of processing, ADP-ribosylated. The ADP-ribosylation is retained in the virion during infection. Post-translationally, phosphorylated on serine and threonine residues.

The protein resides in the virion. Its subcellular location is the host endoplasmic reticulum-Golgi intermediate compartment. It localises to the host Golgi apparatus. Functionally, packages the positive strand viral genome RNA into a helical ribonucleocapsid (RNP) and plays a fundamental role during virion assembly through its interactions with the viral genome and membrane protein M. Plays an important role in enhancing the efficiency of subgenomic viral RNA transcription as well as viral replication. This Sus scrofa (Pig) protein is Nucleoprotein.